The primary structure comprises 340 residues: Probable peroxidase 61 (340 aa).

An N-terminal signal peptide occupies residues 1–25 (MQFVNFFPLLALVVISLAGKATVEA). 4 disulfide bridges follow: Cys-46/Cys-122, Cys-79/Cys-84, Cys-128/Cys-331, and Cys-205/Cys-237. Asn-63 carries an N-linked (GlcNAc...) asparagine glycan. Arg-73 is an active-site residue. 5 residues coordinate Ca(2+): Asp-78, Val-81, Gly-83, Asp-85, and Ser-87. Pro-168 serves as a coordination point for substrate. A heme b-binding site is contributed by His-198. Ser-199 serves as a coordination point for Ca(2+). Residue Asn-226 is glycosylated (N-linked (GlcNAc...) asparagine). The Ca(2+) site is built by Asp-255 and Ser-258.

Belongs to the peroxidase family. Classical plant (class III) peroxidase subfamily. Requires heme b as cofactor. Ca(2+) serves as cofactor.

It localises to the secreted. The enzyme catalyses 2 a phenolic donor + H2O2 = 2 a phenolic radical donor + 2 H2O. Removal of H(2)O(2), oxidation of toxic reductants, biosynthesis and degradation of lignin, suberization, auxin catabolism, response to environmental stresses such as wounding, pathogen attack and oxidative stress. The enzyme activity has to be proved. The sequence is that of Probable peroxidase 61 (PER61) from Arabidopsis thaliana (Mouse-ear cress).